A 359-amino-acid chain; its full sequence is Malonyl-CoA reductase (359 aa).

16 to 19 (TGLV) is a binding site for NADP(+). Cys-153 (acyl-thioester intermediate) is an active-site residue. 183–184 (SG) serves as a coordination point for NADP(+). The active-site Proton acceptor is the His-248. An NADP(+)-binding site is contributed by 335–336 (NT).

It belongs to the aspartate-semialdehyde dehydrogenase family. As to quaternary structure, homodimer and possibly a tetramer. Mg(2+) is required as a cofactor. Mn(2+) serves as cofactor.

It carries out the reaction 3-oxopropanoate + NADP(+) + CoA = malonyl-CoA + NADPH + H(+). With respect to regulation, activated by dithioerythritol (5 mM) and inhibited by the thiol-blocking agent iodoacetamide (0.1 mM). Catalyzes the reduction of malonyl-CoA to malonate semialdehyde, a key step in the 3-hydroxypropanoate and the 3-hydroxypropanoate/4-hydroxybutyrate cycles. Can also use succinyl-CoA and succinate semialdehyde as substrates but at a lower rate than malonyl-CoA. The chain is Malonyl-CoA reductase (mcr) from Sulfurisphaera tokodaii (strain DSM 16993 / JCM 10545 / NBRC 100140 / 7) (Sulfolobus tokodaii).